The chain runs to 318 residues: Basic leucine zipper (bZIP) transcription factor atfB (318 aa).

Residues 114 to 157 are disordered; it reads FNSSPPEYAPPKHRSSLSEQSQTDGYGVSTRRRKASAIDQCEQQ. The basic motif stretch occupies residues 160 to 199; sequence REKREKFLERNRLAASKCRQKKKEHTKLLETRFREVSNKK. A bZIP domain is found at 160–223; the sequence is REKREKFLER…LNLKNEMLRH (64 aa). The leucine-zipper stretch occupies residues 202 to 216; that stretch reads LESEIEHLRSEVLNL. Residues 275–301 form a disordered region; it reads DGPMQLPSEMGSPLDQRRDSEQSIMTE.

This sequence belongs to the bZIP family. ATF subfamily.

It localises to the nucleus. Functionally, transcription factor that acts as a key player in the regulatory circuit that integrates secondary metabolism and cellular response to oxidative stress. Regulates the genes involved in development and stress response through direct binding to their promoters. This is Basic leucine zipper (bZIP) transcription factor atfB from Aspergillus flavus (strain ATCC 200026 / FGSC A1120 / IAM 13836 / NRRL 3357 / JCM 12722 / SRRC 167).